The chain runs to 584 residues: DNA ligase (584 aa).

E249 contacts ATP. Catalysis depends on K251, which acts as the N6-AMP-lysine intermediate. Residues R256, R271, E301, F341, R416, and K422 each contribute to the ATP site.

The protein belongs to the ATP-dependent DNA ligase family. The cofactor is Mg(2+).

The enzyme catalyses ATP + (deoxyribonucleotide)n-3'-hydroxyl + 5'-phospho-(deoxyribonucleotide)m = (deoxyribonucleotide)n+m + AMP + diphosphate.. In terms of biological role, DNA ligase that seals nicks in double-stranded DNA during DNA replication, DNA recombination and DNA repair. This Pyrobaculum islandicum (strain DSM 4184 / JCM 9189 / GEO3) protein is DNA ligase.